A 179-amino-acid chain; its full sequence is Negative modulator of initiation of replication (179 aa).

The interaction with DNA stretch occupies residues 86–87 (AV).

The protein belongs to the SeqA family. As to quaternary structure, homodimer. Polymerizes to form helical filaments.

It localises to the cytoplasm. Negative regulator of replication initiation, which contributes to regulation of DNA replication and ensures that replication initiation occurs exactly once per chromosome per cell cycle. Binds to pairs of hemimethylated GATC sequences in the oriC region, thus preventing assembly of replication proteins and re-initiation at newly replicated origins. Repression is relieved when the region becomes fully methylated. The protein is Negative modulator of initiation of replication of Shewanella woodyi (strain ATCC 51908 / MS32).